The following is a 1932-amino-acid chain: DOCK-like protein 1 (1932 aa).

Positions 1410–1824 (LLEANRPELF…EIERYSRTLS (415 aa)) constitute a DOCKER domain. Polar residues predominate over residues 1908-1921 (STFLAGSQPNTNTD). The tract at residues 1908–1932 (STFLAGSQPNTNTDSQHKHDYSHSG) is disordered. Residues 1922 to 1932 (SQHKHDYSHSG) are compositionally biased toward basic and acidic residues.

This sequence belongs to the DOCK family. As to quaternary structure, forms an active heterodimer with LMO1.

It is found in the cytoplasm. The protein localises to the mitochondrion. Functionally, forms a transiant heterodimeric complex with LMO1, that acts as a guanine nucleotide exchange factor exchange factor (GEF) for the small GTPase RHO5. DCK1, LMO1 and RHO5 relocate to mitochondria upon oxidative stress and trigger cell death. The DCK1/LMO1/RHO5 signaling module mediates mitochondrial turnover under nitrogen starvation conditions via mitophagy. The DCK1/LMO1/RHO5 signaling module plays also a function in cell wall integrity signaling. The polypeptide is DOCK-like protein 1 (Saccharomyces cerevisiae (strain ATCC 204508 / S288c) (Baker's yeast)).